The primary structure comprises 2325 residues: Protein Ycf2 (2325 aa).

3 disordered regions span residues 168 to 189, 221 to 251, and 947 to 1006; these read SSQL…GTED, TEIE…EMNN, and KRKK…KRKE. A compositionally biased stretch (low complexity) spans 230 to 240; the sequence is KGLSGSSSKSR. 2 stretches are compositionally biased toward basic and acidic residues: residues 241-250 and 955-1004; these read LFTEGEKEMN and KRKE…PEKR. ATP is bound at residue 1436 to 1443; it reads GSIGSGRS. Disordered regions lie at residues 1510–1529, 1855–1996, and 2063–2179; these read YEDR…DYEP, LVGS…LLRP, and PAEE…DGFS. A compositionally biased stretch (acidic residues) spans 1861-1976; the sequence is TEEEVEGTEE…VEGTEDEEGE (116 aa). Positions 1977–1989 are enriched in basic and acidic residues; it reads GTEKDSSQFDNDR. 2 stretches are compositionally biased toward acidic residues: residues 2063–2080 and 2087–2162; these read PAEE…EALE and GEEE…ENDS.

The protein belongs to the Ycf2 family.

Its subcellular location is the plastid. The protein localises to the chloroplast stroma. Its function is as follows. Probable ATPase of unknown function. Its presence in a non-photosynthetic plant (Epifagus virginiana) and experiments in tobacco indicate that it has an essential function which is probably not related to photosynthesis. The protein is Protein Ycf2 of Oenothera biennis (German evening primrose).